Consider the following 205-residue polypeptide: Dr1-associated corepressor (205 aa).

The 64-residue stretch at 14–77 (PARIKKIMQT…SHLKQCIELE (64 aa)) folds into the Histone-fold domain. Positions 91–205 (PDMQGDGEDN…DEEDEEDYDS (115 aa)) are disordered. A compositionally biased stretch (basic and acidic residues) spans 98-108 (EDNHMDGDKGA). Gly residues predominate over residues 114 to 125 (PGSGGRKNGGMG). The segment covering 138–155 (SEQEDESEDTDTDGEEET) has biased composition (acidic residues). Residues 184–193 (PLPPAPPGPS) show a composition bias toward pro residues. The segment covering 195 to 205 (PDEEDEEDYDS) has biased composition (acidic residues).

Belongs to the NC2 alpha/DRAP1 family. In terms of assembly, heterodimer with DR1. Binds BTAF1. Post-translationally, phosphorylation reduces DNA binding, but has no effect on heterodimerization and TBP binding. In terms of tissue distribution, ubiquitous. Highly expressed in adult testis, heart, skeletal muscle, pancreas and brain, and in fetal brain, liver and kidney.

It localises to the nucleus. In terms of biological role, the association of the DR1/DRAP1 heterodimer with TBP results in a functional repression of both activated and basal transcription of class II genes. This interaction precludes the formation of a transcription-competent complex by inhibiting the association of TFIIA and/or TFIIB with TBP. Can bind to DNA on its own. The polypeptide is Dr1-associated corepressor (DRAP1) (Homo sapiens (Human)).